The chain runs to 179 residues: Large ribosomal subunit protein uL5 (179 aa).

It belongs to the universal ribosomal protein uL5 family. Part of the 50S ribosomal subunit; part of the 5S rRNA/L5/L18/L25 subcomplex. Contacts the 5S rRNA and the P site tRNA. Forms a bridge to the 30S subunit in the 70S ribosome.

Functionally, this is one of the proteins that bind and probably mediate the attachment of the 5S RNA into the large ribosomal subunit, where it forms part of the central protuberance. In the 70S ribosome it contacts protein S13 of the 30S subunit (bridge B1b), connecting the 2 subunits; this bridge is implicated in subunit movement. Contacts the P site tRNA; the 5S rRNA and some of its associated proteins might help stabilize positioning of ribosome-bound tRNAs. The polypeptide is Large ribosomal subunit protein uL5 (Agathobacter rectalis (strain ATCC 33656 / DSM 3377 / JCM 17463 / KCTC 5835 / VPI 0990) (Eubacterium rectale)).